The chain runs to 628 residues: Cystathionine gamma-synthase-like enzyme iboG2 (628 aa).

Tyr313 serves as a coordination point for substrate. Lys417 is modified (N6-(pyridoxal phosphate)lysine).

This sequence belongs to the trans-sulfuration enzymes family. The cofactor is pyridoxal 5'-phosphate.

It participates in secondary metabolite biosynthesis. Its function is as follows. Cystathionine gamma-synthase-like enzyme; part of the gene cluster that mediates the biosynthesis of the psychoactive metabolites ibotenic acid and muscimol. The first committed step is glutamate hydroxylation by the 2-oxoglutarate-dependent dioxygenase iboH, and the last step is decarboxylation of ibotenic acid to muscimol by the decarboxylase iboD. The order of the intermediate reactions is somewhat ambiguous. IboA likely activates the carboxylic acid at position 5 to introduce an amide bond, and the flavin monooxygenase iboF generates the N-O bond. There are several options for the latter step. One option is that iboF directly hydroxylates the amide nitrogen formed by iboA to produce a hydroxamic acid species. Another option is that iboF hydroxylates an external N-containing compound, whose resulting N-O bond is subsequently introduced into the hydroxyglutamate scaffold. The paralogous PLP-dependent cystathionine gamma-synthase-like enzymes iboG1 and iboG2 are likely involved in substitution of the OH group at position 3 by the O-N moiety. The first cyclic intermediate is most probably tricholomic acid which is likely desaturated to ibotenic acid by the cytochrome P450 monooxygenase iboC. The sequence is that of Cystathionine gamma-synthase-like enzyme iboG2 from Amanita muscaria (strain Koide BX008).